The chain runs to 676 residues: Potassium voltage-gated channel subfamily KQT member 1 (676 aa).

Disordered stretches follow at residues 1 to 28 and 62 to 84; these read MAAA…RGSA and APPA…PRPP. Over 1-120 the chain is Cytoplasmic; the sequence is MAAASSPPRA…YNFLERPTGW (120 aa). Serine 27 bears the Phosphoserine; by PKA mark. Positions 62 to 73 are enriched in pro residues; sequence APPASPAAPAAP. A helical transmembrane segment spans residues 121 to 142; the sequence is KCFVYHFAVFLIVLVCLIFSVL. The Extracellular segment spans residues 143-153; it reads STIEQYAALAT. The helical transmembrane segment at 154–176 threads the bilayer; that stretch reads GTLFWMEIVLVVFFGTEYVVRLW. Over 177–192 the chain is Cytoplasmic; that stretch reads SAGCRSKYVGLWGRLR. A helical transmembrane segment spans residues 193-218; that stretch reads FARKPISIIDLIVVVASMVVLCVGSK. The Extracellular portion of the chain corresponds to 219-226; sequence GQVFATSA. A helical; Voltage-sensor transmembrane segment spans residues 227–242; that stretch reads IRGIRFLQILRMLHVD. The segment at 238-246 is interaction with KCNE3; it reads MLHVDRQGG. Topologically, residues 243–260 are cytoplasmic; that stretch reads RQGGTWRLLGSVVFIHRQ. A 1,2-diacyl-sn-glycero-3-phospho-(1D-myo-inositol-4,5-bisphosphate) is bound at residue glutamine 244. Residues 261–283 traverse the membrane as a helical segment; it reads ELITTLYIGFLGLIFSSYFVYLA. The Extracellular portion of the chain corresponds to 284-299; that stretch reads EKDAVNESGRVEFGSY. An N-linked (GlcNAc...) asparagine glycan is attached at asparagine 289. The pore-forming intramembrane region spans 300–320; it reads ADALWWGVVTVTTIGYGDKVP. Over 321–322 the chain is Extracellular; it reads QT. The helical transmembrane segment at 323-348 threads the bilayer; that stretch reads WVGKTIASCFSVFAISFFALPAGILG. Residues 349 to 676 are Cytoplasmic-facing; that stretch reads SGFALKVQQK…VPRRGPDEGS (328 aa). The interval 370–382 is interaction with CALM; the sequence is AAASLIQTAWRCY. A phosphoserine mark is found at serine 407 and serine 409. Positions 515 to 529 are interaction with CALM; calcium-dependent; that stretch reads KVIRRMQYFVAKKKF. The interaction with KCNE1 C-terminus stretch occupies residues 535–572; it reads PYDVRDVIEQYSQGHLNLMVRIKELQRRLDQSIGKPSL. A coiled-coil region spans residues 585 to 621; sequence SNTIGARLNRVEDKVTQLDQRLALITDMLHQLLSLHG. An interaction with AKAP9 region spans residues 588-616; sequence IGARLNRVEDKVTQLDQRLALITDMLHQL. Residues 589–620 form a C-terminal assembly domain (tetramerization) region; the sequence is GARLNRVEDKVTQLDQRLALITDMLHQLLSLH. The tract at residues 620–676 is disordered; sequence HGGSTPGSGGPPREGGAHITQPCGSGGSVDPELFLPSNTLPTYEQLTVPRRGPDEGS. Positions 623–632 are enriched in gly residues; the sequence is STPGSGGPPR. Over residues 655 to 664 the composition is skewed to polar residues; the sequence is PSNTLPTYEQ.

This sequence belongs to the potassium channel family. KQT (TC 1.A.1.15) subfamily. Kv7.1/KCNQ1 sub-subfamily. Tetramer. Heterotetramer with KCNE1; targets to the membrane raft. Interacts (via C-terminus) with calmodulin; forms a heterooctameric structure (with 4:4 KCNQ1:CALM stoichiometry); the interaction is calcium-independent, constitutive, participates in the proper assembly of a functional channel and also acts a calcium sensor. KCNQ1 channels interact more strongly with Ca(2+)-CALM than with apoCALM. Interacts with AKAP9; targets protein kinase A (PKA) catalytic and regulatory subunits and protein phosphatase 1 (PP1) to the KCNQ1-KCNE1 complex, allowing PKA-mediated phosphorylation and increase of delayed rectifier potassium channel activity. Interacts with KCNE2; forms a heterooligomer complex that targets to the membrane raft and leading to currents with an apparently instantaneous activation, a rapid deactivation process and a linear current-voltage relationship and decreases the amplitude of the outward current. Interacts with AP2M1; mediates estrogen-induced internalization via clathrin-coated vesicles. Interacts with NEDD4L; promotes internalization and decreases I(Ks) currents. Interacts with USP2; counteracts the NEDD4L-specific down-regulation of I(Ks) and restore plasma membrane localization. Heterotetramer with KCNQ5; has a voltage-gated potassium channel activity. Interacts with KCNE3; four KCNE3 molecules are bound to one KCNQ1 tetramer (4:4 KCNQ1:KCNE3 stoichiometry); alters membrane raft localization; affects KCNQ1 structure and gating properties. Interacts with KCNE4; impairs KCNQ1 localization in lipid rafts and inhibits voltage-gated potassium channel activity. Interacts with KCNE5; impairs KCNQ1 localization in lipid rafts and only conducts current upon strong and continued depolarization. Interacts with SLC5A3; forms coregulatory channel-transporter complexes that modulate Na(+)-coupled myo-inositol influx through the transporter. Post-translationally, phosphorylation at Ser-27 by PKA; increases delayed rectifier potassium channel activity of the KCNQ1-KCNE1 complex through a macromolecular complex that includes PKA, PP1, and the targeting protein AKAP9. In terms of processing, ubiquitinated by NEDD4L; promotes internalization. The ubiquitinylated form is internalized through a clathrin-mediated endocytosis by interacting with AP2M1 and is recycled back to the cell membrane via RAB4A and RAB11A. Deubiquitinated by USP2; counteracts the NEDD4L-specific down-regulation of I(Ks) and restores the membrane localization. As to expression, abundantly expressed in heart, pancreas, prostate, kidney, small intestine and peripheral blood leukocytes. Less abundant in placenta, lung, spleen, colon, thymus, testis and ovaries.

The protein resides in the cell membrane. The protein localises to the cytoplasmic vesicle membrane. It is found in the early endosome. Its subcellular location is the membrane raft. It localises to the endoplasmic reticulum. The protein resides in the basolateral cell membrane. The protein localises to the apical cell membrane. It catalyses the reaction K(+)(in) = K(+)(out). Its activity is regulated as follows. PIP2 molecule is essential to activate KCNQ channels by inducing the coupling of the voltage-sensing domain (VSD) and the pore-forming domain (PD). Upon channel activation, PIP2 disrupts the VSD-calmodulin/CALM interactions, causing the release of CALM from the VSD which triggers the opening of the gate. Calcium potentiates KCNQ1 channel current through calcium-bound CALM. Calcium-bound CALM competes with PIP2 to stabilize the channel open state. Pore-forming subunit of the voltage-gated potassium (Kv) channel involved in the regulation of cardiomyocyte excitability and important in normal development and functions of myocardium, inner ear, stomach and colon. Associates with KCNE beta subunits that modulates current kinetics. Induces a voltage-dependent current by rapidly activating and slowly deactivating potassium-selective outward current. Also promotes a delayed voltage activated potassium current showing outward rectification characteristic. During beta-adrenergic receptor stimulation, participates in cardiac repolarization by associating with KCNE1 to form the I(Ks) cardiac potassium current that increases the amplitude and slows down the activation kinetics of outward potassium current I(Ks). Muscarinic agonist oxotremorine-M strongly suppresses KCNQ1/KCNE1 current. When associated with KCNE3, forms the potassium channel that is important for cyclic AMP-stimulated intestinal secretion of chloride ions. This interaction with KCNE3 is reduced by 17beta-estradiol, resulting in the reduction of currents. During conditions of increased substrate load, maintains the driving force for proximal tubular and intestinal sodium ions absorption, gastric acid secretion, and cAMP-induced jejunal chloride ions secretion. Allows the provision of potassium ions to the luminal membrane of the secretory canaliculus in the resting state as well as during stimulated acid secretion. When associated with KCNE2, forms a heterooligomer complex leading to currents with an apparently instantaneous activation, a rapid deactivation process and a linear current-voltage relationship and decreases the amplitude of the outward current. When associated with KCNE4, inhibits voltage-gated potassium channel activity. When associated with KCNE5, this complex only conducts current upon strong and continued depolarization. Also forms a heterotetramer with KCNQ5; has a voltage-gated potassium channel activity. Binds with phosphatidylinositol 4,5-bisphosphate. KCNQ1-KCNE2 channel associates with Na(+)-coupled myo-inositol symporter in the apical membrane of choroid plexus epithelium and regulates the myo-inositol gradient between blood and cerebrospinal fluid with an impact on neuron excitability. Functionally, non-functional alone but modulatory when coexpressed with the full-length isoform 1. The sequence is that of Potassium voltage-gated channel subfamily KQT member 1 from Homo sapiens (Human).